We begin with the raw amino-acid sequence, 314 residues long: Homoserine kinase (314 aa).

An ATP-binding site is contributed by 97 to 107 (PPARGMGSSAT).

This sequence belongs to the GHMP kinase family. Homoserine kinase subfamily.

Its subcellular location is the cytoplasm. The catalysed reaction is L-homoserine + ATP = O-phospho-L-homoserine + ADP + H(+). Its pathway is amino-acid biosynthesis; L-threonine biosynthesis; L-threonine from L-aspartate: step 4/5. Functionally, catalyzes the ATP-dependent phosphorylation of L-homoserine to L-homoserine phosphate. This Synechococcus sp. (strain RCC307) protein is Homoserine kinase.